Reading from the N-terminus, the 202-residue chain is Recombination protein RecR (202 aa).

A C4-type zinc finger spans residues 61 to 76 (CARCNSFTEDEVCATC). In terms of domain architecture, Toprim spans 84–179 (GLLCIVETPA…KVTRLARGVP (96 aa)).

It belongs to the RecR family.

Its function is as follows. May play a role in DNA repair. It seems to be involved in an RecBC-independent recombinational process of DNA repair. It may act with RecF and RecO. This Bordetella pertussis (strain Tohama I / ATCC BAA-589 / NCTC 13251) protein is Recombination protein RecR.